Here is a 348-residue protein sequence, read N- to C-terminus: MASPAIRLTQYSHGAGCGCKISPKVLDKILHTEQQKFFDPRLLVGNETRDDAAVYDIGNGVGIISTTDFFMPIVDDPFDFGRIAATNAISDVYAMGGKPIMAIAILGWPIDKLAPEIAQQVIEGGRYVCQQAGISLAGGHSIDAPEPILGLAVTGIVSTEQVKKNSAAKPGCKLFLTKPLGIGILTTAEKKSKLRPEHRGLATETMCQLNKPGADFAHIPGVTAMTDVTGFGLLGHLSEICQGSGVQAILHYSAIPRLPAVEDYIAEGCVPGGTGRNFDSYGHLIGNMSDLQKQLLCDPQTSGGLLLAVLPDAEADVQAIAAQHGMTLSPIGELTSADSRRALIEIVV.

Cys-17 is an active-site residue. Residues Lys-20 and 48 to 50 (TRD) contribute to the ATP site. Asp-51 contacts Mg(2+). ATP is bound by residues Asp-68, Asp-91, and 139–141 (GHS). Asp-91 contacts Mg(2+). Asp-227 serves as a coordination point for Mg(2+).

It belongs to the selenophosphate synthase 1 family. Class I subfamily. As to quaternary structure, homodimer. Requires Mg(2+) as cofactor.

The enzyme catalyses hydrogenselenide + ATP + H2O = selenophosphate + AMP + phosphate + 2 H(+). Synthesizes selenophosphate from selenide and ATP. The chain is Selenide, water dikinase from Yersinia pestis.